A 267-amino-acid chain; its full sequence is 22 kDa alpha-zein 14 (267 aa).

The signal sequence occupies residues 1-21; it reads MATKILSLLALLALFASATNA.

This sequence belongs to the zein family.

Its function is as follows. Zeins are major seed storage proteins. This Zea mays (Maize) protein is 22 kDa alpha-zein 14.